An 81-amino-acid polypeptide reads, in one-letter code: ATP synthase subunit c (81 aa).

2 helical membrane-spanning segments follow: residues 6-26 (ASASVIAAALAVGLAAIGPGI) and 57-77 (LAFMESLTIYGLVISLVLLFA).

The protein belongs to the ATPase C chain family. As to quaternary structure, F-type ATPases have 2 components, F(1) - the catalytic core - and F(0) - the membrane proton channel. F(1) has five subunits: alpha(3), beta(3), gamma(1), delta(1), epsilon(1). F(0) has four main subunits: a(1), b(1), b'(1) and c(10-14). The alpha and beta chains form an alternating ring which encloses part of the gamma chain. F(1) is attached to F(0) by a central stalk formed by the gamma and epsilon chains, while a peripheral stalk is formed by the delta, b and b' chains.

It localises to the cellular thylakoid membrane. In terms of biological role, f(1)F(0) ATP synthase produces ATP from ADP in the presence of a proton or sodium gradient. F-type ATPases consist of two structural domains, F(1) containing the extramembraneous catalytic core and F(0) containing the membrane proton channel, linked together by a central stalk and a peripheral stalk. During catalysis, ATP synthesis in the catalytic domain of F(1) is coupled via a rotary mechanism of the central stalk subunits to proton translocation. Key component of the F(0) channel; it plays a direct role in translocation across the membrane. A homomeric c-ring of between 10-14 subunits forms the central stalk rotor element with the F(1) delta and epsilon subunits. The sequence is that of ATP synthase subunit c from Gloeothece citriformis (strain PCC 7424) (Cyanothece sp. (strain PCC 7424)).